We begin with the raw amino-acid sequence, 570 residues long: Urease subunit alpha (570 aa).

The Urease domain maps to 132–570; the sequence is GGFDSHIHYI…LPLAQRYFLF (439 aa). Ni(2+) contacts are provided by histidine 137, histidine 139, and lysine 220. N6-carboxylysine is present on lysine 220. Histidine 222 is a binding site for substrate. The Ni(2+) site is built by histidine 249 and histidine 275. The active-site Proton donor is histidine 323. Aspartate 363 provides a ligand contact to Ni(2+).

The protein belongs to the metallo-dependent hydrolases superfamily. Urease alpha subunit family. Heterotrimer of UreA (gamma), UreB (beta) and UreC (alpha) subunits. Three heterotrimers associate to form the active enzyme. The cofactor is Ni cation. In terms of processing, carboxylation allows a single lysine to coordinate two nickel ions.

The protein localises to the cytoplasm. The catalysed reaction is urea + 2 H2O + H(+) = hydrogencarbonate + 2 NH4(+). The protein operates within nitrogen metabolism; urea degradation; CO(2) and NH(3) from urea (urease route): step 1/1. In Ruegeria sp. (strain TM1040) (Silicibacter sp.), this protein is Urease subunit alpha.